Here is a 488-residue protein sequence, read N- to C-terminus: Glutamyl-tRNA(Gln) amidotransferase subunit A (488 aa).

Active-site charge relay system residues include Lys76 and Ser151. The active-site Acyl-ester intermediate is the Ser175.

Belongs to the amidase family. GatA subfamily. As to quaternary structure, heterotrimer of A, B and C subunits.

It carries out the reaction L-glutamyl-tRNA(Gln) + L-glutamine + ATP + H2O = L-glutaminyl-tRNA(Gln) + L-glutamate + ADP + phosphate + H(+). Functionally, allows the formation of correctly charged Gln-tRNA(Gln) through the transamidation of misacylated Glu-tRNA(Gln) in organisms which lack glutaminyl-tRNA synthetase. The reaction takes place in the presence of glutamine and ATP through an activated gamma-phospho-Glu-tRNA(Gln). In Symbiobacterium thermophilum (strain DSM 24528 / JCM 14929 / IAM 14863 / T), this protein is Glutamyl-tRNA(Gln) amidotransferase subunit A.